We begin with the raw amino-acid sequence, 359 residues long: Chorismate synthase (359 aa).

Arg-48 and Arg-54 together coordinate NADP(+). Residues 125-127, 243-244, Gly-283, 298-302, and Arg-324 contribute to the FMN site; these read RSS, NA, and KPTSS.

This sequence belongs to the chorismate synthase family. As to quaternary structure, homotetramer. It depends on FMNH2 as a cofactor.

The enzyme catalyses 5-O-(1-carboxyvinyl)-3-phosphoshikimate = chorismate + phosphate. It functions in the pathway metabolic intermediate biosynthesis; chorismate biosynthesis; chorismate from D-erythrose 4-phosphate and phosphoenolpyruvate: step 7/7. In terms of biological role, catalyzes the anti-1,4-elimination of the C-3 phosphate and the C-6 proR hydrogen from 5-enolpyruvylshikimate-3-phosphate (EPSP) to yield chorismate, which is the branch point compound that serves as the starting substrate for the three terminal pathways of aromatic amino acid biosynthesis. This reaction introduces a second double bond into the aromatic ring system. This is Chorismate synthase from Mannheimia succiniciproducens (strain KCTC 0769BP / MBEL55E).